Here is a 178-residue protein sequence, read N- to C-terminus: CASP-like protein 5A1 (178 aa).

Residues 1-24 form a disordered region; the sequence is MFASRPAVHPVEAPPPTDPVEQPT. Topologically, residues 1–37 are cytoplasmic; sequence MFASRPAVHPVEAPPPTDPVEQPTGVLMKDLPGMPGT. A helical transmembrane segment spans residues 38–58; it reads AGGLGLRVAQFVFAGVALAVM. Over 59 to 69 the chain is Extracellular; it reads ASTSDFPSVTA. Residues 70–90 form a helical membrane-spanning segment; that stretch reads FCYLVAATIMQCLWSFSLAIV. The Cytoplasmic portion of the chain corresponds to 91 to 105; it reads DIYALLVKRCLRNRR. Residues 106-126 traverse the membrane as a helical segment; that stretch reads AVCLFAIGDGITAALTFGAAC. The Extracellular segment spans residues 127–152; the sequence is SSAGITVLIDNDLNICAENHCGSFKT. The chain crosses the membrane as a helical span at residues 153 to 173; it reads ATALAFMSWFALTPSFLLNFW. Topologically, residues 174 to 178 are cytoplasmic; it reads SMAAR.

It belongs to the Casparian strip membrane proteins (CASP) family. As to quaternary structure, homodimer and heterodimers.

Its subcellular location is the cell membrane. In Brachypodium distachyon (Purple false brome), this protein is CASP-like protein 5A1.